The following is a 301-amino-acid chain: Ankyrin repeat domain-containing protein 29 (301 aa).

ANK repeat units lie at residues Pro-11–Cys-41, His-45–Leu-74, Ser-78–Phe-107, Asp-111–Asp-140, Asp-144–Gln-173, Asp-177–Ala-206, Asp-210–Ile-239, and Asn-242–Leu-271.

In Homo sapiens (Human), this protein is Ankyrin repeat domain-containing protein 29 (ANKRD29).